Consider the following 392-residue polypeptide: ABSCISIC ACID-INSENSITIVE 5-like protein 4 (392 aa).

Residues 1 to 22 (MGTHIDINNLGGDTSRGNESKP) form a disordered region. 3 positions are modified to phosphoserine: Ser28, Ser50, and Ser96. At Thr135 the chain carries Phosphothreonine. A disordered region spans residues 266-297 (NMGGAGGTVTATSPGTSSAENNTWSSPVPYVF). A compositionally biased stretch (polar residues) spans 274–291 (VTATSPGTSSAENNTWSS). Positions 311-374 (VERRQKRMIK…NSELKEFSKQ (64 aa)) constitute a bZIP domain. The segment at 313–332 (RRQKRMIKNRESAARSRARK) is basic motif. The leucine-zipper stretch occupies residues 339-360 (LEAEIESLKLVNQDLQKKQAEI).

The protein belongs to the bZIP family. ABI5 subfamily. DNA-binding heterodimer. Interacts with ABI3 and the AFP proteins AFP1, AFP2, AFP3 and AFP4. Phosphorylated by CPK4, CPK11, SRK2D and SRK2I in vitro.

The protein resides in the nucleus. Its function is as follows. Binds to the ABA-responsive element (ABRE). Could participate in abscisic acid-regulated gene expression. The protein is ABSCISIC ACID-INSENSITIVE 5-like protein 4 (ABF1) of Arabidopsis thaliana (Mouse-ear cress).